The sequence spans 217 residues: Probable transaldolase (217 aa).

Lysine 83 functions as the Schiff-base intermediate with substrate in the catalytic mechanism.

The protein belongs to the transaldolase family. Type 3B subfamily.

Its subcellular location is the cytoplasm. The catalysed reaction is D-sedoheptulose 7-phosphate + D-glyceraldehyde 3-phosphate = D-erythrose 4-phosphate + beta-D-fructose 6-phosphate. Its pathway is carbohydrate degradation; pentose phosphate pathway; D-glyceraldehyde 3-phosphate and beta-D-fructose 6-phosphate from D-ribose 5-phosphate and D-xylulose 5-phosphate (non-oxidative stage): step 2/3. Its function is as follows. Transaldolase is important for the balance of metabolites in the pentose-phosphate pathway. The protein is Probable transaldolase of Jannaschia sp. (strain CCS1).